The primary structure comprises 251 residues: Probable transcriptional regulatory protein AAur_2300 (251 aa).

This sequence belongs to the TACO1 family.

The protein resides in the cytoplasm. This chain is Probable transcriptional regulatory protein AAur_2300, found in Paenarthrobacter aurescens (strain TC1).